A 525-amino-acid polypeptide reads, in one-letter code: Light-independent protochlorophyllide reductase subunit B (525 aa).

D36 serves as a coordination point for [4Fe-4S] cluster. D274 functions as the Proton donor in the catalytic mechanism. A substrate-binding site is contributed by 409–410 (GL). Residues 433–464 (HGGKAVAREESPVAPADLAPAATSDTPAAPSP) are disordered. The span at 444-464 (PVAPADLAPAATSDTPAAPSP) shows a compositional bias: low complexity.

The protein belongs to the ChlB/BchB/BchZ family. As to quaternary structure, protochlorophyllide reductase is composed of three subunits; BchL, BchN and BchB. Forms a heterotetramer of two BchB and two BchN subunits. [4Fe-4S] cluster serves as cofactor.

The catalysed reaction is chlorophyllide a + oxidized 2[4Fe-4S]-[ferredoxin] + 2 ADP + 2 phosphate = protochlorophyllide a + reduced 2[4Fe-4S]-[ferredoxin] + 2 ATP + 2 H2O. It participates in porphyrin-containing compound metabolism; bacteriochlorophyll biosynthesis (light-independent). Component of the dark-operative protochlorophyllide reductase (DPOR) that uses Mg-ATP and reduced ferredoxin to reduce ring D of protochlorophyllide (Pchlide) to form chlorophyllide a (Chlide). This reaction is light-independent. The NB-protein (BchN-BchB) is the catalytic component of the complex. The protein is Light-independent protochlorophyllide reductase subunit B of Rhodobacter capsulatus (strain ATCC BAA-309 / NBRC 16581 / SB1003).